Here is a 146-residue protein sequence, read N- to C-terminus: Hemoglobin subunit beta (146 aa).

Positions 2–146 (PFSAHEEKLI…VAAALSAEYH (145 aa)) constitute a Globin domain. Heme b is bound by residues H63 and H92.

Belongs to the globin family. As to quaternary structure, heterotetramer of two alpha chains and two beta chains. Red blood cells.

Its function is as follows. Involved in oxygen transport from the lung to the various peripheral tissues. In Caiman crocodilus (Spectacled caiman), this protein is Hemoglobin subunit beta (HBB).